Here is a 555-residue protein sequence, read N- to C-terminus: Formate--tetrahydrofolate ligase (555 aa).

63 to 70 contacts ATP; the sequence is TPAGEGKT.

It belongs to the formate--tetrahydrofolate ligase family.

It catalyses the reaction (6S)-5,6,7,8-tetrahydrofolate + formate + ATP = (6R)-10-formyltetrahydrofolate + ADP + phosphate. Its pathway is one-carbon metabolism; tetrahydrofolate interconversion. The polypeptide is Formate--tetrahydrofolate ligase (Beijerinckia indica subsp. indica (strain ATCC 9039 / DSM 1715 / NCIMB 8712)).